Reading from the N-terminus, the 144-residue chain is Large ribosomal subunit protein uL15 (144 aa).

The disordered stretch occupies residues 1-53 (MRLNTLSPAEGAKHAPKRVGRGIGSGLGKTAGRGHKGQNSRSGGGVRRGFEGG). The segment covering 21–31 (RGIGSGLGKTA) has biased composition (gly residues).

The protein belongs to the universal ribosomal protein uL15 family. As to quaternary structure, part of the 50S ribosomal subunit.

Binds to the 23S rRNA. This is Large ribosomal subunit protein uL15 from Serratia proteamaculans (strain 568).